The sequence spans 615 residues: DNA mismatch repair protein MutL (615 aa).

The segment at 363-397 is disordered; it reads FAEPAVREPVAPRYTPAPASGSRPAAPWPNAQPGY. The segment covering 378–391 has biased composition (low complexity); the sequence is PAPASGSRPAAPWP.

It belongs to the DNA mismatch repair MutL/HexB family.

In terms of biological role, this protein is involved in the repair of mismatches in DNA. It is required for dam-dependent methyl-directed DNA mismatch repair. May act as a 'molecular matchmaker', a protein that promotes the formation of a stable complex between two or more DNA-binding proteins in an ATP-dependent manner without itself being part of a final effector complex. This chain is DNA mismatch repair protein MutL, found in Escherichia coli O157:H7 (strain EC4115 / EHEC).